Here is a 291-residue protein sequence, read N- to C-terminus: Nucleotide-binding protein RALTA_A0325 (291 aa).

8–15 lines the ATP pocket; it reads GISGSGKS. 57 to 60 is a GTP binding site; it reads DIRS.

The protein belongs to the RapZ-like family.

In terms of biological role, displays ATPase and GTPase activities. The sequence is that of Nucleotide-binding protein RALTA_A0325 from Cupriavidus taiwanensis (strain DSM 17343 / BCRC 17206 / CCUG 44338 / CIP 107171 / LMG 19424 / R1) (Ralstonia taiwanensis (strain LMG 19424)).